The chain runs to 484 residues: Major extracellular endoglucanase (484 aa).

An N-terminal signal peptide occupies residues Met-1–Ser-25. Residue Glu-182 is the Proton donor of the active site. Glu-303 (nucleophile) is an active-site residue. Residues Gly-370–Ser-402 are disordered. Residues Thr-375–Pro-399 form a thr-Pro repeats ('hinge') (Pro-Thr box) region. Positions Thr-378–Thr-398 are enriched in pro residues. In terms of domain architecture, CBM2 spans Pro-395–Ser-484.

It belongs to the glycosyl hydrolase 5 (cellulase A) family.

The catalysed reaction is Endohydrolysis of (1-&gt;4)-beta-D-glucosidic linkages in cellulose, lichenin and cereal beta-D-glucans.. The protein is Major extracellular endoglucanase (engXCA) of Xanthomonas campestris pv. campestris (strain ATCC 33913 / DSM 3586 / NCPPB 528 / LMG 568 / P 25).